Reading from the N-terminus, the 67-residue chain is Small ribosomal subunit protein eS17 (67 aa).

It belongs to the eukaryotic ribosomal protein eS17 family. In terms of assembly, part of the 30S ribosomal subunit.

The polypeptide is Small ribosomal subunit protein eS17 (Pyrococcus furiosus (strain ATCC 43587 / DSM 3638 / JCM 8422 / Vc1)).